A 68-amino-acid chain; its full sequence is MIHVPVNANNSDLAIRSLKKKMQRELVFRSMKMSRFYEPPSVKRVRKKQESERRHRKERAMRRRMMEE.

Residues 39-68 form a disordered region; sequence PPSVKRVRKKQESERRHRKERAMRRRMMEE. Residues 54–68 are compositionally biased toward basic residues; that stretch reads RHRKERAMRRRMMEE.

Belongs to the bacterial ribosomal protein bS21 family.

This is Small ribosomal subunit protein bS21 from Orientia tsutsugamushi (strain Boryong) (Rickettsia tsutsugamushi).